The sequence spans 455 residues: Guanine/hypoxanthine permease GhxQ (455 aa).

At 1-31 the chain is on the cytoplasmic side; that stretch reads MSGDILQTPDAPKPQGALDNYFKITARGSTV. Residues 32-55 traverse the membrane as a helical segment; that stretch reads RQEVLAGLTTFLAMVYSVIVVPGM. The Periplasmic segment spans residues 56–65; sequence LGKAGFPPAA. A helical membrane pass occupies residues 66–84; sequence VFVATCLVAGFGSLLMGLW. Residues 85 to 86 are Cytoplasmic-facing; that stretch reads AN. A discontinuously helical membrane pass occupies residues 87–103; the sequence is LPMAIGCAISLTAFTAF. The Periplasmic portion of the chain corresponds to 104–115; the sequence is SLVLGQQISVPV. A helical membrane pass occupies residues 116–135; it reads ALGAVFLMGVIFTAISVTGV. At 136 to 147 the chain is on the cytoplasmic side; the sequence is RTWILRNLPMGI. Residues 148 to 168 form a helical membrane-spanning segment; sequence AHGTGIGIGLFLLLIAANGVG. At 169-186 the chain is on the periplasmic side; the sequence is MVIKNPIEGLPVALGAFT. The chain crosses the membrane as a helical span at residues 187–204; that stretch reads SFPVMMSLLGLAVIFGLE. The Cytoplasmic portion of the chain corresponds to 205–208; it reads KCRV. A helical transmembrane segment spans residues 209 to 228; it reads PGGILLVIIAISIIGLIFDP. At 229 to 260 the chain is on the periplasmic side; the sequence is AVKYHGLVAMPSLTGEDGKSLIFSLDIMGALQ. A helical membrane pass occupies residues 261 to 289; sequence PTVLPSVLALVMTAVFDATGTIRAVAGQA. The Cytoplasmic segment spans residues 290-302; it reads NLLDKDNQIINGG. Residues 303–318 form a helical membrane-spanning segment; the sequence is KALTSDSVSSIFSGLV. Topologically, residues 319–320 are periplasmic; the sequence is GA. Residues 321–336 traverse the membrane as a discontinuously helical segment; sequence APAAVYIESAAGTAAG. Residues 337–340 are Cytoplasmic-facing; sequence GKTG. Residues 341 to 355 form a helical membrane-spanning segment; the sequence is LTATVVGALFLLILF. Residues 356–366 are Periplasmic-facing; it reads LSPLSFLIPGY. Residues 367-386 traverse the membrane as a helical segment; that stretch reads ATAPALMYVGLLMLSNVSKL. Topologically, residues 387–391 are cytoplasmic; that stretch reads DFNDF. The segment at residues 392–427 is an intramembrane region (discontinuously helical); sequence IDAMAGLVCAVFIVLTCNIVTGIMLGFVTLVVGRVF. Residues 428 to 455 lie on the Cytoplasmic side of the membrane; the sequence is AREWQKLNIGTVIITAALVAFYAGGWAI.

Belongs to the nucleobase:cation symporter-2 (NCS2) (TC 2.A.40) family. Azg-like subfamily.

The protein resides in the cell membrane. Functionally, high-affinity transporter for guanine and hypoxanthine. In Escherichia coli (strain K12), this protein is Guanine/hypoxanthine permease GhxQ (ghxQ).